We begin with the raw amino-acid sequence, 334 residues long: Glyceraldehyde-3-phosphate dehydrogenase (334 aa).

NAD(+) is bound by residues 12-13 and glycine 111; that span reads TI. 140 to 142 provides a ligand contact to D-glyceraldehyde 3-phosphate; it reads SCN. Residue cysteine 141 is the Nucleophile of the active site. Residue arginine 167 participates in NAD(+) binding. 192–193 serves as a coordination point for D-glyceraldehyde 3-phosphate; it reads HG. Glutamine 298 contacts NAD(+).

The protein belongs to the glyceraldehyde-3-phosphate dehydrogenase family. As to quaternary structure, homotetramer.

It is found in the cytoplasm. It carries out the reaction D-glyceraldehyde 3-phosphate + phosphate + NADP(+) = (2R)-3-phospho-glyceroyl phosphate + NADPH + H(+). The catalysed reaction is D-glyceraldehyde 3-phosphate + phosphate + NAD(+) = (2R)-3-phospho-glyceroyl phosphate + NADH + H(+). It participates in carbohydrate degradation; glycolysis; pyruvate from D-glyceraldehyde 3-phosphate: step 1/5. The chain is Glyceraldehyde-3-phosphate dehydrogenase from Thermococcus onnurineus (strain NA1).